Here is a 357-residue protein sequence, read N- to C-terminus: UDP-N-acetylglucosamine--N-acetylmuramyl-(pentapeptide) pyrophosphoryl-undecaprenol N-acetylglucosamine transferase (357 aa).

UDP-N-acetyl-alpha-D-glucosamine contacts are provided by residues 12–14, Asn124, Arg163, Ser191, Ile245, 264–269, and Gln290; these read TGG and ALTVSE.

The protein belongs to the glycosyltransferase 28 family. MurG subfamily.

It is found in the cell inner membrane. It catalyses the reaction di-trans,octa-cis-undecaprenyl diphospho-N-acetyl-alpha-D-muramoyl-L-alanyl-D-glutamyl-meso-2,6-diaminopimeloyl-D-alanyl-D-alanine + UDP-N-acetyl-alpha-D-glucosamine = di-trans,octa-cis-undecaprenyl diphospho-[N-acetyl-alpha-D-glucosaminyl-(1-&gt;4)]-N-acetyl-alpha-D-muramoyl-L-alanyl-D-glutamyl-meso-2,6-diaminopimeloyl-D-alanyl-D-alanine + UDP + H(+). It functions in the pathway cell wall biogenesis; peptidoglycan biosynthesis. In terms of biological role, cell wall formation. Catalyzes the transfer of a GlcNAc subunit on undecaprenyl-pyrophosphoryl-MurNAc-pentapeptide (lipid intermediate I) to form undecaprenyl-pyrophosphoryl-MurNAc-(pentapeptide)GlcNAc (lipid intermediate II). In Nitrosospira multiformis (strain ATCC 25196 / NCIMB 11849 / C 71), this protein is UDP-N-acetylglucosamine--N-acetylmuramyl-(pentapeptide) pyrophosphoryl-undecaprenol N-acetylglucosamine transferase.